The following is a 288-amino-acid chain: Energy-coupling factor transporter ATP-binding protein EcfA2 (288 aa).

An ABC transporter domain is found at I3 to L245. G40 to S47 is a binding site for ATP.

It belongs to the ABC transporter superfamily. Energy-coupling factor EcfA family. Forms a stable energy-coupling factor (ECF) transporter complex composed of 2 membrane-embedded substrate-binding proteins (S component), 2 ATP-binding proteins (A component) and 2 transmembrane proteins (T component).

It is found in the cell membrane. Its function is as follows. ATP-binding (A) component of a common energy-coupling factor (ECF) ABC-transporter complex. Unlike classic ABC transporters this ECF transporter provides the energy necessary to transport a number of different substrates. In Clostridioides difficile (strain 630) (Peptoclostridium difficile), this protein is Energy-coupling factor transporter ATP-binding protein EcfA2.